A 131-amino-acid polypeptide reads, in one-letter code: Large ribosomal subunit protein bL17 (131 aa).

This sequence belongs to the bacterial ribosomal protein bL17 family. Part of the 50S ribosomal subunit. Contacts protein L32.

The sequence is that of Large ribosomal subunit protein bL17 from Oenococcus oeni (strain ATCC BAA-331 / PSU-1).